The primary structure comprises 612 residues: Threonine--tRNA ligase (612 aa).

The tract at residues 218–509 is catalytic; the sequence is NHRKLGVELG…LSEHFGGNFP (292 aa). The Zn(2+) site is built by Cys-310, His-361, and His-486.

It belongs to the class-II aminoacyl-tRNA synthetase family. In terms of assembly, homodimer. It depends on Zn(2+) as a cofactor.

The protein resides in the cytoplasm. It catalyses the reaction tRNA(Thr) + L-threonine + ATP = L-threonyl-tRNA(Thr) + AMP + diphosphate + H(+). Catalyzes the attachment of threonine to tRNA(Thr) in a two-step reaction: L-threonine is first activated by ATP to form Thr-AMP and then transferred to the acceptor end of tRNA(Thr). Also edits incorrectly charged L-seryl-tRNA(Thr). This Helicobacter pylori (strain Shi470) protein is Threonine--tRNA ligase.